The chain runs to 319 residues: GTPase Era (319 aa).

The Era-type G domain occupies 9 to 196 (RSGVSLIIGR…MRTLRDLLPE (188 aa)). The segment at 17 to 24 (GRPSSGKS) is G1. 17–24 (GRPSSGKS) contributes to the GTP binding site. A G2 region spans residues 43–47 (QTTRN). Residues 64–67 (DTPG) are G3. Residues 64-68 (DTPGY) and 127-130 (NKVD) contribute to the GTP site. A G4 region spans residues 127 to 130 (NKVD). A G5 region spans residues 175-177 (ISA). A KH type-2 domain is found at 227–303 (CRDELPHALY…HISLDIRVKV (77 aa)).

Belongs to the TRAFAC class TrmE-Era-EngA-EngB-Septin-like GTPase superfamily. Era GTPase family. In terms of assembly, monomer.

It localises to the cytoplasm. It is found in the cell inner membrane. Its function is as follows. An essential GTPase that binds both GDP and GTP, with rapid nucleotide exchange. Plays a role in 16S rRNA processing and 30S ribosomal subunit biogenesis and possibly also in cell cycle regulation and energy metabolism. This is GTPase Era from Treponema pallidum (strain Nichols).